Here is a 190-residue protein sequence, read N- to C-terminus: MSRNENRAALSDVLQALQQEEVIAYPTEAVFGLGCDPDSEKAVNALLALKQRPWQKGLILIAANYEQLKPYVDDSALTDSQRETIFSVWPGPVTWVIPTHPETPRWLTGSFDSLAVRVSDHPLVQQLCSQYGKPLVSTSANLSGQEPCRTIEEVRIQFGSSLPVLAGLVGGRLNPSEIRDALTGKQFRQG.

A YrdC-like domain is found at R7 to G190.

The protein belongs to the SUA5 family. TsaC subfamily.

It localises to the cytoplasm. The catalysed reaction is L-threonine + hydrogencarbonate + ATP = L-threonylcarbamoyladenylate + diphosphate + H2O. In terms of biological role, required for the formation of a threonylcarbamoyl group on adenosine at position 37 (t(6)A37) in tRNAs that read codons beginning with adenine. Catalyzes the conversion of L-threonine, HCO(3)(-)/CO(2) and ATP to give threonylcarbamoyl-AMP (TC-AMP) as the acyladenylate intermediate, with the release of diphosphate. The sequence is that of Threonylcarbamoyl-AMP synthase from Yersinia enterocolitica serotype O:8 / biotype 1B (strain NCTC 13174 / 8081).